The sequence spans 216 residues: ATP-dependent Clp protease proteolytic subunit (216 aa).

Serine 109 functions as the Nucleophile in the catalytic mechanism. Residue histidine 134 is part of the active site.

This sequence belongs to the peptidase S14 family. As to quaternary structure, fourteen ClpP subunits assemble into 2 heptameric rings which stack back to back to give a disk-like structure with a central cavity, resembling the structure of eukaryotic proteasomes.

The protein resides in the cytoplasm. It catalyses the reaction Hydrolysis of proteins to small peptides in the presence of ATP and magnesium. alpha-casein is the usual test substrate. In the absence of ATP, only oligopeptides shorter than five residues are hydrolyzed (such as succinyl-Leu-Tyr-|-NHMec, and Leu-Tyr-Leu-|-Tyr-Trp, in which cleavage of the -Tyr-|-Leu- and -Tyr-|-Trp bonds also occurs).. Its function is as follows. Cleaves peptides in various proteins in a process that requires ATP hydrolysis. Has a chymotrypsin-like activity. Plays a major role in the degradation of misfolded proteins. In Rhodospirillum rubrum (strain ATCC 11170 / ATH 1.1.1 / DSM 467 / LMG 4362 / NCIMB 8255 / S1), this protein is ATP-dependent Clp protease proteolytic subunit.